A 122-amino-acid polypeptide reads, in one-letter code: Large ribosomal subunit protein uL14 (122 aa).

Belongs to the universal ribosomal protein uL14 family. In terms of assembly, part of the 50S ribosomal subunit. Forms a cluster with proteins L3 and L19. In the 70S ribosome, L14 and L19 interact and together make contacts with the 16S rRNA in bridges B5 and B8.

Binds to 23S rRNA. Forms part of two intersubunit bridges in the 70S ribosome. The polypeptide is Large ribosomal subunit protein uL14 (Limosilactobacillus fermentum (strain NBRC 3956 / LMG 18251) (Lactobacillus fermentum)).